A 330-amino-acid polypeptide reads, in one-letter code: G-protein coupled receptor 157 (330 aa).

Over 1-15 (MPSPAPPTELLPWER) the chain is Extracellular. Residues 16 to 36 (AVVLLSCALSALGSGLLVATH) form a helical membrane-spanning segment. Residues 37-48 (ALWPDLRSRARR) lie on the Cytoplasmic side of the membrane. The helical transmembrane segment at 49-69 (LLLFLSLADLLSAASYFYGVL) threads the bilayer. Topologically, residues 70 to 87 (QDFAGTSWDCVLQGALST) are extracellular. A helical membrane pass occupies residues 88–108 (FANTSSFFWTVAIALYLYLSI). The Cytoplasmic segment spans residues 109 to 119 (VRTTRGPSTDH). Residues 120–140 (LIWAFHLISWGVPLAITVAAV) traverse the membrane as a helical segment. The Extracellular segment spans residues 141–166 (SLKKIGYDASDVSVGWCWINLEAEDR). The chain crosses the membrane as a helical span at residues 167-187 (VLWMLLTGKLWEMLAYILLPL). Over 188–227 (LYLLVRKHINRAHQALSEYRPICEGRQLQRGSSTSTADKK) the chain is Cytoplasmic. Residues 228 to 248 (LVLIPLIFICLRVWSTVRFVL) traverse the membrane as a helical segment. The Extracellular segment spans residues 249–259 (TLCGSPAVQTP). A helical transmembrane segment spans residues 260–280 (VLVVLHGIGNTFQGGANCIMF). Over 281–330 (VLCTRAVRTRLFSLCCCCPRPSTQSPPGAPTPPKIGESQESRRTPEVPST) the chain is Cytoplasmic. Residues 301–330 (PSTQSPPGAPTPPKIGESQESRRTPEVPST) form a disordered region. Residues 317-330 (ESQESRRTPEVPST) show a composition bias toward basic and acidic residues.

This sequence belongs to the G-protein coupled receptor 2 family. As to expression, expressed in the primary cilia of radial glial progenitors (RGPs) in the developing neocortex.

The protein localises to the cell projection. It localises to the cilium membrane. Its function is as follows. Orphan receptor that promotes neuronal differentiation of radial glial progenitors (RGPs). The activity of this receptor is mediated by a G(q)-protein that activates a phosphatidylinositol-calcium second messenger. This chain is G-protein coupled receptor 157 (Gpr157), found in Mus musculus (Mouse).